A 149-amino-acid chain; its full sequence is MAKEDTTQALYKEAFNLFDKDKDGKITIQELGIVMRSVGSNPTQQELKDIAKEIDDGSGLVDFSKFSSLMTRKMKYSDSEADIKQAFKVFDKKGNGYANIQDLKHTLTSIGEKLTKEEFDNMLKDAKTVDGQIHVDEFVRVIKSSKSFN.

EF-hand domains lie at 6–41 (TTQALYKEAFNLFDKDKDGKITIQELGIVMRSVGSN), 42–76 (PTQQELKDIAKEIDDGSGLVDFSKFSSLMTRKMKY), 78–113 (DSEADIKQAFKVFDKKGNGYANIQDLKHTLTSIGEK), and 113–148 (KLTKEEFDNMLKDAKTVDGQIHVDEFVRVIKSSKSF). Ca(2+) is bound by residues Asp19, Asp21, Asp23, Lys25, and Glu30.

The protein belongs to the calmodulin family.

It localises to the contractile vacuole. In terms of biological role, mediates the control of a large number of enzymes, ion channels and other proteins by Ca(2+) ions. Among the enzymes to be stimulated by the calmodulin-Ca(2+) complex are a number of protein kinases and phosphatases. The chain is Calmodulin-like protein (calB) from Dictyostelium discoideum (Social amoeba).